Here is a 710-residue protein sequence, read N- to C-terminus: Probable inactive DNA (cytosine-5)-methyltransferase DRM3 (710 aa).

The tract at residues 1-21 (MADMRRRNGSGGSSNHERNEQ) is disordered. Residues 52 to 92 (SGSNVKSLLIEMGFCPTLVQKAIDENGQDDFELLLEILTKS) enclose the UBA 1 domain. Over residues 167–184 (ESEDSLDGAEINEEDEDV) the composition is skewed to acidic residues. Residues 167-192 (ESEDSLDGAEINEEDEDVTPVTARGP) form a disordered region. A UBA 2 domain is found at 198–242 (QLFETMDKTLRLLEMGFSNDEISMAIEKIGTKGQISVLAESIVTG). Residues 282 to 360 (AQKEDGGGGS…MGDSSSFMET (79 aa)) form a disordered region. Residues 339-350 (YDDRGKRLRPED) show a composition bias toward basic and acidic residues. Residues 379 to 710 (QPRLSQSLGP…RVTKRVRDMM (332 aa)) enclose the SAM-dependent MTase DRM-type domain.

The protein belongs to the class I-like SAM-binding methyltransferase superfamily. DRM-methyltransferase family. Interacts with Pol V.

The protein localises to the nucleus. Catalytically inactive DNA methyltransferase that acts as regulatory factor for DRM2-mediated DNA methylation. Required for maintenance of non-CpG DNA methylation. Required for normal establishment and maintenance of RNA-directed DNA methylation (RdDM) and accumulation of specific repeat-associated small interfering RNAs (siRNAs). Required for nucleolus organizer region (NOR) nuclear organization during interphase. Acts downstream of the production of siRNAs. May promote RNA polymerase V (Pol V) transcriptional elongation or assist in the stabilization of Pol V transcripts. This chain is Probable inactive DNA (cytosine-5)-methyltransferase DRM3, found in Arabidopsis thaliana (Mouse-ear cress).